Consider the following 319-residue polypeptide: 4-hydroxy-3-methylbut-2-enyl diphosphate reductase (319 aa).

Position 15 (Cys15) interacts with [4Fe-4S] cluster. (2E)-4-hydroxy-3-methylbut-2-enyl diphosphate-binding residues include His44 and His77. Residues His44 and His77 each coordinate dimethylallyl diphosphate. His44 and His77 together coordinate isopentenyl diphosphate. Cys99 is a [4Fe-4S] cluster binding site. His127 is a binding site for (2E)-4-hydroxy-3-methylbut-2-enyl diphosphate. Residue His127 participates in dimethylallyl diphosphate binding. Residue His127 participates in isopentenyl diphosphate binding. Residue Glu129 is the Proton donor of the active site. Thr172 provides a ligand contact to (2E)-4-hydroxy-3-methylbut-2-enyl diphosphate. Residue Cys202 coordinates [4Fe-4S] cluster. Residues Ser230, Ser231, Asn232, and Ser274 each contribute to the (2E)-4-hydroxy-3-methylbut-2-enyl diphosphate site. Residues Ser230, Ser231, Asn232, and Ser274 each contribute to the dimethylallyl diphosphate site. Isopentenyl diphosphate contacts are provided by Ser230, Ser231, Asn232, and Ser274.

This sequence belongs to the IspH family. Requires [4Fe-4S] cluster as cofactor.

It carries out the reaction isopentenyl diphosphate + 2 oxidized [2Fe-2S]-[ferredoxin] + H2O = (2E)-4-hydroxy-3-methylbut-2-enyl diphosphate + 2 reduced [2Fe-2S]-[ferredoxin] + 2 H(+). The catalysed reaction is dimethylallyl diphosphate + 2 oxidized [2Fe-2S]-[ferredoxin] + H2O = (2E)-4-hydroxy-3-methylbut-2-enyl diphosphate + 2 reduced [2Fe-2S]-[ferredoxin] + 2 H(+). The protein operates within isoprenoid biosynthesis; dimethylallyl diphosphate biosynthesis; dimethylallyl diphosphate from (2E)-4-hydroxy-3-methylbutenyl diphosphate: step 1/1. Its pathway is isoprenoid biosynthesis; isopentenyl diphosphate biosynthesis via DXP pathway; isopentenyl diphosphate from 1-deoxy-D-xylulose 5-phosphate: step 6/6. Its function is as follows. Catalyzes the conversion of 1-hydroxy-2-methyl-2-(E)-butenyl 4-diphosphate (HMBPP) into a mixture of isopentenyl diphosphate (IPP) and dimethylallyl diphosphate (DMAPP). Acts in the terminal step of the DOXP/MEP pathway for isoprenoid precursor biosynthesis. This Xanthomonas euvesicatoria pv. vesicatoria (strain 85-10) (Xanthomonas campestris pv. vesicatoria) protein is 4-hydroxy-3-methylbut-2-enyl diphosphate reductase.